Here is a 635-residue protein sequence, read N- to C-terminus: Threonine--tRNA ligase (635 aa).

One can recognise a TGS domain in the interval 1 to 61; the sequence is MVSIRLPDGS…DHDVALAIVT (61 aa). The segment at 242–533 is catalytic; sequence DHRKLGKQLD…LIEHHAGAMP (292 aa). Zn(2+)-binding residues include Cys333, His384, and His510.

Belongs to the class-II aminoacyl-tRNA synthetase family. As to quaternary structure, homodimer. The cofactor is Zn(2+).

Its subcellular location is the cytoplasm. The enzyme catalyses tRNA(Thr) + L-threonine + ATP = L-threonyl-tRNA(Thr) + AMP + diphosphate + H(+). Its function is as follows. Catalyzes the attachment of threonine to tRNA(Thr) in a two-step reaction: L-threonine is first activated by ATP to form Thr-AMP and then transferred to the acceptor end of tRNA(Thr). Also edits incorrectly charged L-seryl-tRNA(Thr). The chain is Threonine--tRNA ligase from Paraburkholderia phytofirmans (strain DSM 17436 / LMG 22146 / PsJN) (Burkholderia phytofirmans).